Here is a 463-residue protein sequence, read N- to C-terminus: Retinoic acid receptor RXR-gamma (463 aa).

The segment at 1-138 (MYGNYSHFMK…TSPGSLVKHI (138 aa)) is modulating. Residues 18–53 (SPGHTGSTSMSPSAALSTGKPMDSHPSYTDTPVSAP) are disordered. Residues 21–33 (HTGSTSMSPSAAL) show a composition bias toward polar residues. NR C4-type zinc fingers lie at residues 139–159 (CAIC…CEGC) and 175–194 (CRDN…CQYC). The nuclear receptor DNA-binding region spans 139–204 (CAICGDRSSG…RYQKCLVMGM (66 aa)). Residues 205–230 (KREAVQEERQRSRERAESEAECASSG) form a hinge region. Positions 211–222 (EERQRSRERAES) are enriched in basic and acidic residues. Residues 211–232 (EERQRSRERAESEAECASSGHE) are disordered. An NR LBD domain is found at 231–459 (HEDMPVERIL…TFLMEMLETP (229 aa)).

This sequence belongs to the nuclear hormone receptor family. NR2 subfamily. In terms of assembly, homodimer. Heterodimer with a RAR molecule. Binds DNA preferentially as a RAR/RXR heterodimer. Interacts with RARA. Post-translationally, acetylated by EP300.

The protein localises to the nucleus. Its subcellular location is the cytoplasm. Functionally, receptor for retinoic acid. Retinoic acid receptors bind as heterodimers to their target response elements in response to their ligands, all-trans or 9-cis retinoic acid, and regulate gene expression in various biological processes. The RAR/RXR heterodimers bind to the retinoic acid response elements (RARE) composed of tandem 5'-AGGTCA-3' sites known as DR1-DR5. The high affinity ligand for RXRs is 9-cis retinoic acid. In Pongo abelii (Sumatran orangutan), this protein is Retinoic acid receptor RXR-gamma (RXRG).